Consider the following 474-residue polypeptide: Glutathione synthetase (474 aa).

R125 provides a ligand contact to substrate. E144 is an ATP binding site. Residues E144 and N146 each contribute to the Mg(2+) site. Substrate is bound by residues 148-151 (IAAS), 214-216 (QRN), Q220, and 267-270 (RTGY). ATP is bound by residues K305, 364–373 (KPQREGGGNN), Y375, 398–401 (MDKI), and E425. E368 contributes to the Mg(2+) binding site. R450 lines the substrate pocket. K452 and D458 together coordinate ATP. 461–462 (VA) contributes to the substrate binding site.

It belongs to the eukaryotic GSH synthase family. In terms of assembly, homodimer. Mg(2+) serves as cofactor. As to expression, expressed ubiquitously.

The enzyme catalyses gamma-L-glutamyl-L-cysteine + glycine + ATP = glutathione + ADP + phosphate + H(+). The catalysed reaction is gamma-L-glutamyl-(2S)-2-aminobutanoate + glycine + ATP = ophthalmate + ADP + phosphate + H(+). The protein operates within sulfur metabolism; glutathione biosynthesis; glutathione from L-cysteine and L-glutamate: step 2/2. In terms of biological role, catalyzes the production of glutathione from gamma-glutamylcysteine and glycine in an ATP-dependent manner. Glutathione (gamma-glutamylcysteinylglycine, GSH) is the most abundant intracellular thiol in living aerobic cells and is required for numerous processes including the protection of cells against oxidative damage, amino acid transport, the detoxification of foreign compounds, the maintenance of protein sulfhydryl groups in a reduced state and acts as a cofactor for a number of enzymes. Participates in ophthalmate biosynthesis in hepatocytes. In Xenopus laevis (African clawed frog), this protein is Glutathione synthetase.